The chain runs to 373 residues: Protein RETARDED ROOT GROWTH, mitochondrial (373 aa).

Residues 1–49 constitute a mitochondrion transit peptide; that stretch reads MGKWRAVAALLLRNQLLNSSKRLNLSSSPCVSKHPTIGLASRFLNFRHF. The helical transmembrane segment at 346–362 threads the bilayer; that stretch reads EWCIIFLLAIENAIGIY.

This sequence belongs to the RMD1/sif2 family. In terms of tissue distribution, predominantly expressed in the root meristem, in the primary and lateral root tips. Also present in leaves and pollen.

It is found in the mitochondrion membrane. The protein resides in the mitochondrion. Functionally, required for the maintenance of mitochondrial structure. Positive regulator of cell division and endoreduplication but negative regulator of cell expansion in the postembryonic root meristem, thus leading to the promotion of root growth. This chain is Protein RETARDED ROOT GROWTH, mitochondrial, found in Arabidopsis thaliana (Mouse-ear cress).